The following is a 329-amino-acid chain: uncharacterized protein (329 aa).

Positions 1 to 22 (MPLCNNFSGNLVVAVALFFAGA) are cleaved as a signal peptide.

This is an uncharacterized protein from Arabidopsis thaliana (Mouse-ear cress).